We begin with the raw amino-acid sequence, 436 residues long: 3-ketoacyl-CoA thiolase (436 aa).

Residue Cys-99 is the Acyl-thioester intermediate of the active site. Catalysis depends on proton acceptor residues His-392 and Cys-422.

It belongs to the thiolase-like superfamily. Thiolase family. As to quaternary structure, heterotetramer of two alpha chains (FadJ) and two beta chains (FadI).

It localises to the cytoplasm. The enzyme catalyses an acyl-CoA + acetyl-CoA = a 3-oxoacyl-CoA + CoA. It participates in lipid metabolism; fatty acid beta-oxidation. Its function is as follows. Catalyzes the final step of fatty acid oxidation in which acetyl-CoA is released and the CoA ester of a fatty acid two carbons shorter is formed. In Shewanella oneidensis (strain ATCC 700550 / JCM 31522 / CIP 106686 / LMG 19005 / NCIMB 14063 / MR-1), this protein is 3-ketoacyl-CoA thiolase.